Consider the following 119-residue polypeptide: Large ribosomal subunit protein bL20 (119 aa).

This sequence belongs to the bacterial ribosomal protein bL20 family.

In terms of biological role, binds directly to 23S ribosomal RNA and is necessary for the in vitro assembly process of the 50S ribosomal subunit. It is not involved in the protein synthesizing functions of that subunit. This is Large ribosomal subunit protein bL20 from Burkholderia ambifaria (strain MC40-6).